A 401-amino-acid chain; its full sequence is MDVDSASLSPSSRLSVVCSASAEFSSSSSDSSNFSEGSPPESRRNSVNESVIKDEHYWERRRRNNDASRRSREKRRQNDLAMEEKIMLLSAENERLKSQLGTTPIPQPSVTEPPTSLIIPQVAKNLFPAGPIASLQASSMLTVPLLQAASHIPSMLQLCQLQPTTIQSPVYASTQQPASTSASSLFSSSSSSAFHPFRPSESAQQSFPSSSVIVKIERRSPDSSTDVNMPQPQLQPGSSVIQQIGQPAPSGTPQPVIQAVQQGPSLLSALLSQRRPSPTVPQSRTEHISGLNSPPRHTGNKSDCESVSSSASFSPSHSSEDHSNYSNKSPQYVDRRRRNNEAAKRCRANRRAVFEYRSRRVQLLEGENEDLRTQIETLKAEIAHFKSVLAQRASVVTALHP.

Residues 19–38 show a composition bias toward low complexity; that stretch reads SASAEFSSSSSDSSNFSEGS. The segment at 19–78 is disordered; the sequence is SASAEFSSSSSDSSNFSEGSPPESRRNSVNESVIKDEHYWERRRRNNDASRRSREKRRQN. Positions 41-78 are enriched in basic and acidic residues; that stretch reads ESRRNSVNESVIKDEHYWERRRRNNDASRRSREKRRQN. In terms of domain architecture, bZIP 1 spans 54–100; the sequence is DEHYWERRRRNNDASRRSREKRRQNDLAMEEKIMLLSAENERLKSQL. A basic motif 1 region spans residues 60–85; the sequence is RRRRNNDASRRSREKRRQNDLAMEEK. Positions 89–96 are leucine-zipper 1; the sequence is LSAENERL. The span at 181–211 shows a compositional bias: low complexity; the sequence is SASSLFSSSSSSAFHPFRPSESAQQSFPSSS. Disordered regions lie at residues 181-256 and 273-345; these read SASS…PQPV and QRRP…AAKR. 2 stretches are compositionally biased toward polar residues: residues 222 to 256 and 273 to 283; these read DSSTDVNMPQPQLQPGSSVIQQIGQPAPSGTPQPV and QRRPSPTVPQS. Positions 305–317 are enriched in low complexity; the sequence is ESVSSSASFSPSH. The region spanning 329–392 is the bZIP 2 domain; it reads SPQYVDRRRR…AHFKSVLAQR (64 aa). The segment at 335–360 is basic motif 2; it reads RRRRNNEAAKRCRANRRAVFEYRSRR. Positions 361-388 form a coiled coil; sequence VQLLEGENEDLRTQIETLKAEIAHFKSV. Residues 364–378 are leucine-zipper 2; it reads LEGENEDLRTQIETL.

This sequence belongs to the bZIP family. Interacts with cell death specification protein ces-2. Post-translationally, phosphorylated by mitogen-activated protein kinases pmk-2 and pmk-3. May be responsive to osmotic stress.

Its subcellular location is the nucleus. Acts as a transcription factor that recognizes and binds to the sequence 5'-[GA]TTA[CT]GTAA[CT]-3', a sequence present in many promoters. Involved in the development of the excretory duct cell, by positively modulating embryonic transcription of putative transcription factor lin-48, acting in concert with cell death specification protein ces-2. Negatively modulates expression of key autophagy-related genes, bec-1/ATG6 and lgg-1/ATG8, and may link together autophagy and apoptosis during development. Positively modulates expression of neuropeptide pigment dispersing factor homologs pdf-1 and pdf-2. The protein is Transcription factor atf-2 of Caenorhabditis elegans.